A 354-amino-acid polypeptide reads, in one-letter code: Rhodopsin (354 aa).

The Extracellular portion of the chain corresponds to 1–36 (MNGTEGPAFYVPMSNATGVVRSPYEYPQYYLVAPWA). 2 N-linked (GlcNAc...) asparagine glycosylation sites follow: N2 and N15. The chain crosses the membrane as a helical span at residues 37-61 (YGLLAAYMFFLIITGFPVNFLTLYV). Residues 62-73 (TIEHKKLRTPLN) lie on the Cytoplasmic side of the membrane. Residues 74–96 (YILLNLAIADLFMVFGGFTTTMY) form a helical membrane-spanning segment. At 97 to 110 (TSLHGYFVFGRLGC) the chain is on the extracellular side. A disulfide bridge links C110 with C187. A helical membrane pass occupies residues 111–133 (NLEGFFATLGGEMGLWSLVVLAI). Positions 134–136 (ERW) match the 'Ionic lock' involved in activated form stabilization motif. The Cytoplasmic portion of the chain corresponds to 134–152 (ERWMVVCKPVSNFRFGENH). A helical transmembrane segment spans residues 153 to 173 (AIMGVAFTWVMACSCAVPPLV). Over 174 to 202 (GWSRYIPEGMQCSCGVDYYTRTPGVNNES) the chain is Extracellular. A glycan (N-linked (GlcNAc...) asparagine) is linked at N200. A helical transmembrane segment spans residues 203–224 (FVIYMFIVHFFIPLIVIFFCYG). Over 225 to 252 (RLVCTVKEAAAQQQESETTQRAEREVTR) the chain is Cytoplasmic. Residues 253 to 274 (MVIIMVIAFLICWLPYAGVAWY) traverse the membrane as a helical segment. The Extracellular portion of the chain corresponds to 275 to 286 (IFTHQGSEFGPV). The helical transmembrane segment at 287–308 (FMTLPAFFAKTSAVYNPCIYIC) threads the bilayer. K296 carries the post-translational modification N6-(retinylidene)lysine. At 309–354 (MNKQFRHCMITTLCCGKNPFEEEEGASTTASKTEASSVSSSSVSPA) the chain is on the cytoplasmic side. The tract at residues 333–354 (GASTTASKTEASSVSSSSVSPA) is disordered. The segment covering 334 to 354 (ASTTASKTEASSVSSSSVSPA) has biased composition (low complexity).

Belongs to the G-protein coupled receptor 1 family. Opsin subfamily. Post-translationally, phosphorylated on some or all of the serine and threonine residues present in the C-terminal region. Contains one covalently linked retinal chromophore. As to expression, retinal rod photoreceptor cells, predominantly in the outer segments (at protein level). Retinal rod photoreceptor cells.

Its subcellular location is the membrane. The protein localises to the cell projection. The protein resides in the cilium. It is found in the photoreceptor outer segment. Functionally, photoreceptor required for image-forming vision at low light intensity. While most salt water fish species use retinal as chromophore, most freshwater fish use 3-dehydroretinal, or a mixture of retinal and 3-dehydroretinal. Light-induced isomerization of 11-cis to all-trans retinal triggers a conformational change that activates signaling via G-proteins. Subsequent receptor phosphorylation mediates displacement of the bound G-protein alpha subunit by arrestin and terminates signaling. The sequence is that of Rhodopsin (rho) from Danio rerio (Zebrafish).